A 206-amino-acid chain; its full sequence is MSVCLGVTKGIAVSSLGIYAGILTTGTICTYMVPVDVITKHLNSVVCRVGEVASALGLLSTGFFSLSYFGAPSHLRHPYLIYSALVAPASALYLWAISRCNHKCHAKSKIAEQGKTNGDNKTQSPPLGDSVVDLGADSKVPSGHPPVKEGAKCPMGNAVVTNEPSSTDYARPAGCQSKFAKHLAVVTGVAIIGFLQSVIGVYGEPA.

Helical transmembrane passes span 13–35, 52–72, and 78–98; these read VSSL…MVPV, VASA…FGAP, and PYLI…WAIS. The interval 111–130 is disordered; sequence AEQGKTNGDNKTQSPPLGDS. Positions 114-125 are enriched in polar residues; it reads GKTNGDNKTQSP. A helical membrane pass occupies residues 183 to 203; sequence LAVVTGVAIIGFLQSVIGVYG.

The protein belongs to the ATG33 family.

It is found in the mitochondrion membrane. Its function is as follows. Involved in the selective degradation of mitochondria via autophagy during starvation and at post-log phase. This is Autophagy-related protein 33 (ATG33) from Zygosaccharomyces rouxii (strain ATCC 2623 / CBS 732 / NBRC 1130 / NCYC 568 / NRRL Y-229).